The following is a 556-amino-acid chain: Formate--tetrahydrofolate ligase (556 aa).

65 to 72 is a binding site for ATP; it reads TPAGEGKS.

Belongs to the formate--tetrahydrofolate ligase family.

It catalyses the reaction (6S)-5,6,7,8-tetrahydrofolate + formate + ATP = (6R)-10-formyltetrahydrofolate + ADP + phosphate. Its pathway is one-carbon metabolism; tetrahydrofolate interconversion. This Enterococcus faecalis (strain ATCC 700802 / V583) protein is Formate--tetrahydrofolate ligase.